The primary structure comprises 142 residues: Large ribosomal subunit protein uL11 (142 aa).

The protein belongs to the universal ribosomal protein uL11 family. As to quaternary structure, part of the ribosomal stalk of the 50S ribosomal subunit. Interacts with L10 and the large rRNA to form the base of the stalk. L10 forms an elongated spine to which L12 dimers bind in a sequential fashion forming a multimeric L10(L12)X complex. In terms of processing, one or more lysine residues are methylated.

Forms part of the ribosomal stalk which helps the ribosome interact with GTP-bound translation factors. This is Large ribosomal subunit protein uL11 from Mesorhizobium japonicum (strain LMG 29417 / CECT 9101 / MAFF 303099) (Mesorhizobium loti (strain MAFF 303099)).